Reading from the N-terminus, the 289-residue chain is 4-hydroxybenzoate octaprenyltransferase (289 aa).

The next 7 helical transmembrane spans lie at 33-53 (LWAL…AVFV), 99-119 (LFVV…TMTI), 141-161 (LPQV…FAAV), 163-183 (ESVP…AVAY), 213-233 (LIIG…GRLN), 238-258 (EFYW…KLIV), and 268-288 (AFLN…MSYW).

It belongs to the UbiA prenyltransferase family. It depends on Mg(2+) as a cofactor.

It localises to the cell inner membrane. The catalysed reaction is all-trans-octaprenyl diphosphate + 4-hydroxybenzoate = 4-hydroxy-3-(all-trans-octaprenyl)benzoate + diphosphate. It functions in the pathway cofactor biosynthesis; ubiquinone biosynthesis. Catalyzes the prenylation of para-hydroxybenzoate (PHB) with an all-trans polyprenyl group. Mediates the second step in the final reaction sequence of ubiquinone-8 (UQ-8) biosynthesis, which is the condensation of the polyisoprenoid side chain with PHB, generating the first membrane-bound Q intermediate 3-octaprenyl-4-hydroxybenzoate. This chain is 4-hydroxybenzoate octaprenyltransferase, found in Enterobacter sp. (strain 638).